The following is an 89-amino-acid chain: Cell division topological specificity factor (89 aa).

Belongs to the MinE family.

In terms of biological role, prevents the cell division inhibition by proteins MinC and MinD at internal division sites while permitting inhibition at polar sites. This ensures cell division at the proper site by restricting the formation of a division septum at the midpoint of the long axis of the cell. This is Cell division topological specificity factor from Klebsiella pneumoniae subsp. pneumoniae (strain ATCC 700721 / MGH 78578).